A 156-amino-acid polypeptide reads, in one-letter code: Arginine repressor (156 aa).

The protein belongs to the ArgR family.

Its subcellular location is the cytoplasm. Its pathway is amino-acid biosynthesis; L-arginine biosynthesis [regulation]. Regulates arginine biosynthesis genes. The sequence is that of Arginine repressor from Pectobacterium atrosepticum (strain SCRI 1043 / ATCC BAA-672) (Erwinia carotovora subsp. atroseptica).